Here is a 476-residue protein sequence, read N- to C-terminus: Aspartyl/glutamyl-tRNA(Asn/Gln) amidotransferase subunit B (476 aa).

This sequence belongs to the GatB/GatE family. GatB subfamily. As to quaternary structure, heterotrimer of A, B and C subunits.

The catalysed reaction is L-glutamyl-tRNA(Gln) + L-glutamine + ATP + H2O = L-glutaminyl-tRNA(Gln) + L-glutamate + ADP + phosphate + H(+). It carries out the reaction L-aspartyl-tRNA(Asn) + L-glutamine + ATP + H2O = L-asparaginyl-tRNA(Asn) + L-glutamate + ADP + phosphate + 2 H(+). Its function is as follows. Allows the formation of correctly charged Asn-tRNA(Asn) or Gln-tRNA(Gln) through the transamidation of misacylated Asp-tRNA(Asn) or Glu-tRNA(Gln) in organisms which lack either or both of asparaginyl-tRNA or glutaminyl-tRNA synthetases. The reaction takes place in the presence of glutamine and ATP through an activated phospho-Asp-tRNA(Asn) or phospho-Glu-tRNA(Gln). The polypeptide is Aspartyl/glutamyl-tRNA(Asn/Gln) amidotransferase subunit B (Listeria welshimeri serovar 6b (strain ATCC 35897 / DSM 20650 / CCUG 15529 / CIP 8149 / NCTC 11857 / SLCC 5334 / V8)).